We begin with the raw amino-acid sequence, 296 residues long: MGTIVLKMTAEQISVLQKDLASYATATKNPYAFFSAKVDGTSVIAYTSGKVTFQGAKPEILASRFGYQAEPKQSPDGQNLALIGSDEVGNGSYFGGLAVVASLVTPADHAFLKSLGVDDSKNLNDSKIRQIAPLLEEKIPHKALLLSPRKYNEVVGDGKAHNAVSVKVALHNQAIFLLLQSGAKPDKIVIDAFISEKNYQKYLKNERNHFEFPITLEEKAEGKYLAVAVSSIIARNLFLKNLDKLSQEVGYTLPSGAGAKSDQVAAKLLQAYGDQALQTTAKYHFANTKKAYQRLK.

Residues 80 to 296 enclose the RNase H type-2 domain; the sequence is LALIGSDEVG…NTKKAYQRLK (217 aa). Residues Asp86, Glu87, and Asp191 each coordinate a divalent metal cation.

Belongs to the RNase HII family. RnhC subfamily. It depends on Mn(2+) as a cofactor. The cofactor is Mg(2+).

The protein localises to the cytoplasm. It catalyses the reaction Endonucleolytic cleavage to 5'-phosphomonoester.. Functionally, endonuclease that specifically degrades the RNA of RNA-DNA hybrids. This is Ribonuclease HIII from Streptococcus thermophilus (strain CNRZ 1066).